We begin with the raw amino-acid sequence, 1157 residues long: Cyclin-dependent kinase 12 (1157 aa).

The segment at 15–540 is disordered; that stretch reads SDVSSEDFSD…RSPTSRDLKH (526 aa). The segment covering 18–32 has biased composition (acidic residues); the sequence is SSEDFSDQEAGDLDA. Residues 55–76 are compositionally biased toward basic and acidic residues; the sequence is GRLDAKPDKEGYDNYRSRRAED. The span at 85–94 shows a compositional bias: polar residues; that stretch reads SRQTSSSEAT. T106 carries the post-translational modification Phosphothreonine. Residues 134–162 are compositionally biased toward basic residues; it reads RQKRKKQKKEKHKHKSKKKSKKRKKKRAK. The span at 163 to 176 shows a compositional bias: low complexity; that stretch reads SYSSIDSMSDNDIN. Position 184 is a phosphothreonine (T184). Positions 189–215 are enriched in polar residues; it reads PSKSNERTVSAAPSSFTPHNLKESSSP. A phosphoserine mark is found at S190 and S192. Residue T217 is modified to Phosphothreonine. The segment covering 224–255 has biased composition (polar residues); it reads PNTNSNYYGESSLETANSALGSNLQVTVTNKQ. Residues 256 to 281 are compositionally biased toward low complexity; it reads SISNRLRSPPPSSRSSGNGPRFGNSP. S280 carries the post-translational modification Phosphoserine. T283 is subject to Phosphothreonine. A phosphoserine mark is found at S291, S301, and S314. Positions 315 to 332 are enriched in basic and acidic residues; it reads PHKEDVSAHHRSSHDHGY. Phosphoserine is present on S353. T365 carries the post-translational modification Phosphothreonine. A compositionally biased stretch (basic and acidic residues) spans 392–403; the sequence is GKYERYSRDRYS. A compositionally biased stretch (low complexity) spans 408–422; the sequence is RSPSVQHSRSRQSPS. The segment covering 444–468 has biased composition (polar residues); it reads TTVSSTPSHTTRTSKRASGTGTSGD. Residues 473–484 are compositionally biased toward low complexity; the sequence is SPRTSSRYMESS. Phosphoserine occurs at positions 487 and 492. A compositionally biased stretch (basic residues) spans 495–508; sequence HHYHHRRSPRMRQR. Positions 518–533 are enriched in low complexity; the sequence is PSSASSESSASRSRSP. At S553 the chain carries Phosphoserine. Disordered regions lie at residues 574–661 and 675–782; these read ERQE…ADVP and PFSA…QRPV. Polar residues predominate over residues 586-603; the sequence is GALTINDNSSSVDGNTPN. A compositionally biased stretch (low complexity) spans 609–623; that stretch reads SAPGSGTPAAASTTS. Polar residues-rich tracts occupy residues 644–656 and 721–731; these read NKQN…NPAS and VTSSGSANKSV. Phosphoserine occurs at positions 730, 743, 747, and 755. Residues 746-760 show a composition bias toward acidic residues; that stretch reads LSGDDDVIDSPEDFD. In terms of domain architecture, Protein kinase spans 804-1098; sequence FEMIAQIGEG…AEDALRSPWL (295 aa). ATP is bound by residues 810 to 818, K833, and 891 to 896; these read IGEGTYGQV and EYMDHD. D936 acts as the Proton acceptor in catalysis. An ATP-binding site is contributed by H1118.

This sequence belongs to the protein kinase superfamily. CMGC Ser/Thr protein kinase family. CDC2/CDKX subfamily. As to quaternary structure, interacts with cyclin CycK.

It localises to the nucleus. The protein localises to the chromosome. The enzyme catalyses [DNA-directed RNA polymerase] + ATP = phospho-[DNA-directed RNA polymerase] + ADP + H(+). It carries out the reaction L-seryl-[protein] + ATP = O-phospho-L-seryl-[protein] + ADP + H(+). The catalysed reaction is L-threonyl-[protein] + ATP = O-phospho-L-threonyl-[protein] + ADP + H(+). In terms of biological role, cyclin-dependent kinase which displays CTD kinase activity: hyperphosphorylates the C-terminal heptapeptide repeat domain (CTD) of the largest RNA polymerase II subunit, thereby acting as a key regulator of transcription elongation. The polypeptide is Cyclin-dependent kinase 12 (Cdk12) (Drosophila melanogaster (Fruit fly)).